A 208-amino-acid chain; its full sequence is Adapter protein MecA (208 aa).

This sequence belongs to the MecA family. As to quaternary structure, homodimer.

Enables the recognition and targeting of unfolded and aggregated proteins to the ClpC protease or to other proteins involved in proteolysis. This chain is Adapter protein MecA, found in Exiguobacterium sibiricum (strain DSM 17290 / CCUG 55495 / CIP 109462 / JCM 13490 / 255-15).